A 325-amino-acid polypeptide reads, in one-letter code: DNA repair and recombination protein RadA (325 aa).

Position 107–114 (107–114) interacts with ATP; the sequence is GEFGSGKT.

It belongs to the eukaryotic RecA-like protein family.

Involved in DNA repair and in homologous recombination. Binds and assemble on single-stranded DNA to form a nucleoprotein filament. Hydrolyzes ATP in a ssDNA-dependent manner and promotes DNA strand exchange between homologous DNA molecules. This chain is DNA repair and recombination protein RadA, found in Methanococcoides burtonii (strain DSM 6242 / NBRC 107633 / OCM 468 / ACE-M).